We begin with the raw amino-acid sequence, 505 residues long: 2-isopropylmalate synthase (505 aa).

Residues 5-267 enclose the Pyruvate carboxyltransferase domain; it reads VYIFDTTLRD…YTNIKTEEIY (263 aa). Mn(2+) contacts are provided by aspartate 14, histidine 202, histidine 204, and asparagine 238. A regulatory domain region spans residues 391–505; that stretch reads TLEYLHISSG…VNKLIWDSQK (115 aa).

Belongs to the alpha-IPM synthase/homocitrate synthase family. LeuA type 1 subfamily. As to quaternary structure, homodimer. Mn(2+) is required as a cofactor.

The protein localises to the cytoplasm. The catalysed reaction is 3-methyl-2-oxobutanoate + acetyl-CoA + H2O = (2S)-2-isopropylmalate + CoA + H(+). It participates in amino-acid biosynthesis; L-leucine biosynthesis; L-leucine from 3-methyl-2-oxobutanoate: step 1/4. Catalyzes the condensation of the acetyl group of acetyl-CoA with 3-methyl-2-oxobutanoate (2-ketoisovalerate) to form 3-carboxy-3-hydroxy-4-methylpentanoate (2-isopropylmalate). The polypeptide is 2-isopropylmalate synthase (Pelotomaculum thermopropionicum (strain DSM 13744 / JCM 10971 / SI)).